Consider the following 206-residue polypeptide: Large ribosomal subunit protein bL9 (206 aa).

The tract at residues 182–206 (FAENQQKALAKEMNDNDANSINEEA) is disordered. Residues 197–206 (NDANSINEEA) show a composition bias toward polar residues.

Belongs to the bacterial ribosomal protein bL9 family.

Its function is as follows. Binds to the 23S rRNA. In Bartonella henselae (strain ATCC 49882 / DSM 28221 / CCUG 30454 / Houston 1) (Rochalimaea henselae), this protein is Large ribosomal subunit protein bL9.